We begin with the raw amino-acid sequence, 376 residues long: D-alanine--D-alanine ligase (376 aa).

One can recognise an ATP-grasp domain in the interval 150-358 (KIIFEKEGLP…YSELINKLIE (209 aa)). 183–238 (EGRLTYPCFVKPSNAGSSVGVNKASDRESLVKALNIAAKNDRRILVEEFINGREIE) contributes to the ATP binding site. Residues D311, E325, and N327 each contribute to the Mg(2+) site.

This sequence belongs to the D-alanine--D-alanine ligase family. Mg(2+) is required as a cofactor. The cofactor is Mn(2+).

It localises to the cytoplasm. It carries out the reaction 2 D-alanine + ATP = D-alanyl-D-alanine + ADP + phosphate + H(+). It functions in the pathway cell wall biogenesis; peptidoglycan biosynthesis. In terms of biological role, cell wall formation. In Ruminiclostridium cellulolyticum (strain ATCC 35319 / DSM 5812 / JCM 6584 / H10) (Clostridium cellulolyticum), this protein is D-alanine--D-alanine ligase.